The following is a 306-amino-acid chain: Transcription initiation factor IIB (306 aa).

2 repeat units span residues 122 to 205 and 216 to 297.

This sequence belongs to the TFIIB family.

In terms of biological role, stabilizes TBP binding to an archaeal box-A promoter. Also responsible for recruiting RNA polymerase II to the pre-initiation complex (DNA-TBP-TFIIB). In Saccharolobus shibatae (strain ATCC 51178 / DSM 5389 / JCM 8931 / NBRC 15437 / B12) (Sulfolobus shibatae), this protein is Transcription initiation factor IIB.